We begin with the raw amino-acid sequence, 288 residues long: ATP synthase gamma chain (288 aa).

This sequence belongs to the ATPase gamma chain family. In terms of assembly, F-type ATPases have 2 components, CF(1) - the catalytic core - and CF(0) - the membrane proton channel. CF(1) has five subunits: alpha(3), beta(3), gamma(1), delta(1), epsilon(1). CF(0) has three main subunits: a, b and c.

The protein localises to the cell inner membrane. Functionally, produces ATP from ADP in the presence of a proton gradient across the membrane. The gamma chain is believed to be important in regulating ATPase activity and the flow of protons through the CF(0) complex. This is ATP synthase gamma chain from Legionella pneumophila (strain Corby).